The chain runs to 408 residues: Dual-specificity RNA methyltransferase RlmN (408 aa).

E122 acts as the Proton acceptor in catalysis. Positions E128 to R369 constitute a Radical SAM core domain. The cysteines at positions 135 and 380 are disulfide-linked. [4Fe-4S] cluster-binding residues include C142, C146, and C149. Residues G206–E207, S238, S260–H262, and N337 each bind S-adenosyl-L-methionine. C380 serves as the catalytic S-methylcysteine intermediate.

Belongs to the radical SAM superfamily. RlmN family. It depends on [4Fe-4S] cluster as a cofactor.

Its subcellular location is the cytoplasm. It catalyses the reaction adenosine(2503) in 23S rRNA + 2 reduced [2Fe-2S]-[ferredoxin] + 2 S-adenosyl-L-methionine = 2-methyladenosine(2503) in 23S rRNA + 5'-deoxyadenosine + L-methionine + 2 oxidized [2Fe-2S]-[ferredoxin] + S-adenosyl-L-homocysteine. The enzyme catalyses adenosine(37) in tRNA + 2 reduced [2Fe-2S]-[ferredoxin] + 2 S-adenosyl-L-methionine = 2-methyladenosine(37) in tRNA + 5'-deoxyadenosine + L-methionine + 2 oxidized [2Fe-2S]-[ferredoxin] + S-adenosyl-L-homocysteine. In terms of biological role, specifically methylates position 2 of adenine 2503 in 23S rRNA and position 2 of adenine 37 in tRNAs. m2A2503 modification seems to play a crucial role in the proofreading step occurring at the peptidyl transferase center and thus would serve to optimize ribosomal fidelity. The chain is Dual-specificity RNA methyltransferase RlmN from Chelativorans sp. (strain BNC1).